A 224-amino-acid chain; its full sequence is Transposase for insertion sequence-like element IS431mec (224 aa).

Residues 33 to 52 constitute a DNA-binding region (H-T-H motif); that stretch reads EILRERGVNVHHSTVYRWVQ. Residues 73–222 form the Integrase catalytic domain; sequence WRIDETYIKI…SPCHEISIML (150 aa).

Involved in the transposition of the insertion sequence. The sequence is that of Transposase for insertion sequence-like element IS431mec (tnp) from Staphylococcus aureus (strain NCTC 8325 / PS 47).